The following is a 341-amino-acid chain: Cell division protein ZipA (341 aa).

Residues 1–6 (MENLQL) lie on the Periplasmic side of the membrane. The chain crosses the membrane as a helical span at residues 7 to 27 (VLFVLGAIAIVAVLVHGFWSI). Residues 28–341 (RKQQPKSLKE…YLQRIRTQNS (314 aa)) lie on the Cytoplasmic side of the membrane. Disordered stretches follow at residues 35–134 (LKES…PVLS) and 157–201 (QSSL…PEPE). Residues 90–100 (TLTSEGQMDSS) are compositionally biased toward polar residues. Positions 175-190 (SIEVPEPVSEPVLESV) are enriched in low complexity. A compositionally biased stretch (pro residues) spans 192–201 (EPEPVAPEPE).

The protein belongs to the ZipA family. As to quaternary structure, interacts with FtsZ via their C-terminal domains.

Its subcellular location is the cell inner membrane. Essential cell division protein that stabilizes the FtsZ protofilaments by cross-linking them and that serves as a cytoplasmic membrane anchor for the Z ring. Also required for the recruitment to the septal ring of downstream cell division proteins. This chain is Cell division protein ZipA, found in Shewanella sediminis (strain HAW-EB3).